Reading from the N-terminus, the 328-residue chain is L-lactate dehydrogenase (328 aa).

NAD(+) contacts are provided by residues Val18, Glu39, Lys46, Tyr71, and 85-86 (GA). Residues Gln88 and Arg94 each coordinate substrate. NAD(+)-binding positions include Ser107, 124–126 (AAN), and Ser149. Position 126–129 (126–129 (NPVD)) interacts with substrate. A substrate-binding site is contributed by 154–157 (DSAR). The beta-D-fructose 1,6-bisphosphate site is built by Arg159 and His174. The active-site Proton acceptor is the His181. At Tyr226 the chain carries Phosphotyrosine. Thr235 contacts substrate.

It belongs to the LDH/MDH superfamily. LDH family. Homotetramer.

It localises to the cytoplasm. It carries out the reaction (S)-lactate + NAD(+) = pyruvate + NADH + H(+). The protein operates within fermentation; pyruvate fermentation to lactate; (S)-lactate from pyruvate: step 1/1. Allosterically activated by fructose 1,6-bisphosphate (FBP). Functionally, catalyzes the conversion of lactate to pyruvate. The polypeptide is L-lactate dehydrogenase (Streptococcus pneumoniae (strain 70585)).